The sequence spans 354 residues: MFSRKSLSIFSTLRNYSSSTSKIQKVTLIPGDGIGPEISESVKRVFSAVKAPIEWETVVVDANTGISKEVIESISKNKIGLKGPISTPIGTGHQSLNLGLRKTFNLYANIRPCLSIPGHKTRYNNVNTVVVRENTEGEYSGIENQPVKGVAQSIKIITKEASTRIAHYAFQYALANGRKKVTCIHKANIMKQSDGLFVKSCREVSTRYPSIKYEELTIDNNCMQLVLDPNQMDVMVLPNLYGDIVSDLCAGLIGGLGLTPSGNIGENGSAIFEAVHGTAPDIAGKNKANPTALILSSIMMLRHLGHFHEASIIENAVLNTLTEGKVKTGDLGGNSSCSEYTDELVKKITESLNK.

Substrate-binding residues include Ser95, Asn97, Arg101, Arg111, and Arg132. Residues Asp219, Asp243, and Asp247 each contribute to the Mg(2+) site. NADP(+) is bound by residues 276 to 282 (HGTAPDI) and Asn289.

The protein belongs to the isocitrate and isopropylmalate dehydrogenases family. In terms of assembly, heterooligomer of catalytic and regulatory subunits. Mg(2+) serves as cofactor. The cofactor is Mn(2+).

It localises to the mitochondrion. It catalyses the reaction D-threo-isocitrate + NAD(+) = 2-oxoglutarate + CO2 + NADH. Its function is as follows. Performs an essential role in the oxidative function of the citric acid cycle. The chain is Isocitrate dehydrogenase [NAD] regulatory subunit A, mitochondrial (idhA) from Dictyostelium discoideum (Social amoeba).